The following is a 388-amino-acid chain: Succinate--CoA ligase [ADP-forming] subunit beta (388 aa).

In terms of domain architecture, ATP-grasp spans 9–244 (KSLFAEYGLP…PSQDDAREAH (236 aa)). Residues Lys46, 53–55 (GRG), Glu99, Thr102, and Glu107 each bind ATP. Mg(2+) contacts are provided by Asn199 and Asp213. Substrate contacts are provided by residues Asn264 and 321-323 (GIV).

This sequence belongs to the succinate/malate CoA ligase beta subunit family. As to quaternary structure, heterotetramer of two alpha and two beta subunits. Mg(2+) serves as cofactor.

It catalyses the reaction succinate + ATP + CoA = succinyl-CoA + ADP + phosphate. It carries out the reaction GTP + succinate + CoA = succinyl-CoA + GDP + phosphate. It participates in carbohydrate metabolism; tricarboxylic acid cycle; succinate from succinyl-CoA (ligase route): step 1/1. Its function is as follows. Succinyl-CoA synthetase functions in the citric acid cycle (TCA), coupling the hydrolysis of succinyl-CoA to the synthesis of either ATP or GTP and thus represents the only step of substrate-level phosphorylation in the TCA. The beta subunit provides nucleotide specificity of the enzyme and binds the substrate succinate, while the binding sites for coenzyme A and phosphate are found in the alpha subunit. The polypeptide is Succinate--CoA ligase [ADP-forming] subunit beta (Shewanella frigidimarina (strain NCIMB 400)).